Reading from the N-terminus, the 318-residue chain is 2-oxoacid:ferredoxin oxidoreductase 1, subunit beta (318 aa).

Cys18, Cys21, and Cys52 together coordinate [4Fe-4S] cluster. Thiamine diphosphate contacts are provided by residues 50 to 53 (IGCS) and His69. Asp94 contributes to the Mg(2+) binding site. A thiamine diphosphate-binding site is contributed by 95 to 96 (GD). Mg(2+) contacts are provided by Asn122 and Val124. Thiamine diphosphate is bound at residue 126-127 (GL). Cys201 serves as a coordination point for [4Fe-4S] cluster.

As to quaternary structure, heterodimer composed of an alpha and a beta subunit. [4Fe-4S] cluster is required as a cofactor. The cofactor is thiamine diphosphate. It depends on Mg(2+) as a cofactor.

The catalysed reaction is a 2-oxocarboxylate + 2 oxidized [2Fe-2S]-[ferredoxin] + CoA = an acyl-CoA + 2 reduced [2Fe-2S]-[ferredoxin] + CO2 + H(+). Functionally, catalyzes the coenzyme A-dependent oxidative decarboxylation of different 2-oxoacids such as pyruvate, 2-oxobutyrate and glyoxylate to form their CoA derivatives. This chain is 2-oxoacid:ferredoxin oxidoreductase 1, subunit beta, found in Aeropyrum pernix (strain ATCC 700893 / DSM 11879 / JCM 9820 / NBRC 100138 / K1).